The following is an 854-amino-acid chain: Translation initiation factor IF-2 (854 aa).

The span at 61 to 72 shows a compositional bias: basic residues; sequence KNIKTPTAKKPK. Disordered regions lie at residues 61 to 115 and 167 to 186; these read KNIK…LASA and ESLKKKKKEKKSFVASKKES. The segment covering 73-108 has biased composition (basic and acidic residues); that stretch reads KENAKDQEKLNESEKKEPKKEESKEQEKQEIIDTHK. A tr-type G domain is found at 353-520; it reads TRAPVITIMG…IVLLQADILE (168 aa). A G1 region spans residues 362 to 369; the sequence is GHVDHGKT. 362 to 369 lines the GTP pocket; that stretch reads GHVDHGKT. A G2 region spans residues 387–391; the sequence is GITQH. Residues 408–411 form a G3 region; it reads DTPG. GTP-binding positions include 408–412 and 462–465; these read DTPGH and NKMD. A G4 region spans residues 462-465; sequence NKMD. Residues 498–500 form a G5 region; the sequence is SAK.

Belongs to the TRAFAC class translation factor GTPase superfamily. Classic translation factor GTPase family. IF-2 subfamily.

It localises to the cytoplasm. In terms of biological role, one of the essential components for the initiation of protein synthesis. Protects formylmethionyl-tRNA from spontaneous hydrolysis and promotes its binding to the 30S ribosomal subunits. Also involved in the hydrolysis of GTP during the formation of the 70S ribosomal complex. In Campylobacter jejuni subsp. doylei (strain ATCC BAA-1458 / RM4099 / 269.97), this protein is Translation initiation factor IF-2.